The following is a 424-amino-acid chain: Histidine--tRNA ligase (424 aa).

The protein belongs to the class-II aminoacyl-tRNA synthetase family. Homodimer.

It localises to the cytoplasm. It carries out the reaction tRNA(His) + L-histidine + ATP = L-histidyl-tRNA(His) + AMP + diphosphate + H(+). This Escherichia coli (strain 55989 / EAEC) protein is Histidine--tRNA ligase.